Reading from the N-terminus, the 258-residue chain is Regulatory protein RecX (258 aa).

It belongs to the RecX family.

It localises to the cytoplasm. Functionally, modulates RecA activity. The sequence is that of Regulatory protein RecX from Streptococcus gordonii (strain Challis / ATCC 35105 / BCRC 15272 / CH1 / DL1 / V288).